Reading from the N-terminus, the 128-residue chain is Disintegrin lebein-2-alpha (128 aa).

Residues 1–20 (MIQVLLVTICLAVFPFHGSS) form the signal peptide. Positions 21–46 (IILESGNVNDYEVVYPKKVTLLPTGA) are excised as a propeptide. One can recognise a Disintegrin domain in the interval 47-111 (MNSANPCCDP…SDCPRNPWKS (65 aa)). Intrachain disulfides connect cysteine 53-cysteine 76, cysteine 67-cysteine 73, cysteine 72-cysteine 97, and cysteine 85-cysteine 104. The Cell attachment site; atypical (MLD) motif lies at 89 to 91 (MLD). Positions 112–128 (EEDEMKWSATAKGSVLM) are excised as a propeptide.

The protein belongs to the disintegrin family. Dimeric disintegrin subfamily. In terms of assembly, heterodimer with subunit beta; disulfide-linked. Expressed by the venom gland.

The protein resides in the secreted. Inhibits ADP-induced human platelet aggregation. Antagonist of alpha-IIb/beta-3 (ITGA2B/ITGB3). Also avidly binds to the laminin-binding beta-1 integrins (alpha-3/beta-1 (ITGA3/ITGB1), alpha-6/beta-1 (ITGA6/ITGB1), and alpha-7/beta-1 (ITGA7/ITGB1)) in an RGD-independent manner. The chain is Disintegrin lebein-2-alpha from Macrovipera lebetinus (Levantine viper).